Here is a 216-residue protein sequence, read N- to C-terminus: Cytochrome c biogenesis ATP-binding export protein CcmA (216 aa).

The region spanning 18-216 (LQVEGLAGRR…AHARTLEISA (199 aa)) is the ABC transporter domain. Residue 50–57 (GHNGSGKT) participates in ATP binding.

The protein belongs to the ABC transporter superfamily. CcmA exporter (TC 3.A.1.107) family. In terms of assembly, the complex is composed of two ATP-binding proteins (CcmA) and two transmembrane proteins (CcmB).

The protein resides in the cell inner membrane. The enzyme catalyses heme b(in) + ATP + H2O = heme b(out) + ADP + phosphate + H(+). Part of the ABC transporter complex CcmAB involved in the biogenesis of c-type cytochromes; once thought to export heme, this seems not to be the case, but its exact role is uncertain. Responsible for energy coupling to the transport system. In Nitrosococcus oceani (strain ATCC 19707 / BCRC 17464 / JCM 30415 / NCIMB 11848 / C-107), this protein is Cytochrome c biogenesis ATP-binding export protein CcmA.